Reading from the N-terminus, the 322-residue chain is HPr kinase/phosphorylase (322 aa).

Active-site residues include His-142 and Lys-163. ATP is bound at residue 157-164 (GASGVGKS). Ser-164 is a Mg(2+) binding site. Residue Asp-181 is the Proton acceptor; for phosphorylation activity. Proton donor; for dephosphorylation activity of the active site. The interval 205-214 (MEIRGIGIID) is important for the catalytic mechanism of both phosphorylation and dephosphorylation. Glu-206 is a Mg(2+) binding site. Arg-247 is a catalytic residue. Positions 268–273 (PVKVGR) are important for the catalytic mechanism of dephosphorylation.

This sequence belongs to the HPrK/P family. In terms of assembly, homohexamer. Mg(2+) is required as a cofactor.

It carries out the reaction [HPr protein]-L-serine + ATP = [HPr protein]-O-phospho-L-serine + ADP + H(+). It catalyses the reaction [HPr protein]-O-phospho-L-serine + phosphate + H(+) = [HPr protein]-L-serine + diphosphate. Functionally, catalyzes the ATP- as well as the pyrophosphate-dependent phosphorylation of a specific serine residue in HPr, a phosphocarrier protein of the phosphoenolpyruvate-dependent sugar phosphotransferase system (PTS). HprK/P also catalyzes the pyrophosphate-producing, inorganic phosphate-dependent dephosphorylation (phosphorolysis) of seryl-phosphorylated HPr (P-Ser-HPr). The two antagonistic activities of HprK/P are regulated by several intracellular metabolites, which change their concentration in response to the absence or presence of rapidly metabolisable carbon sources (glucose, fructose, etc.) in the growth medium. Therefore, by controlling the phosphorylation state of HPr, HPrK/P is a sensor enzyme that plays a major role in the regulation of carbon metabolism and sugar transport: it mediates carbon catabolite repression (CCR), and regulates PTS-catalyzed carbohydrate uptake and inducer exclusion. The protein is HPr kinase/phosphorylase of Lactobacillus acidophilus (strain ATCC 700396 / NCK56 / N2 / NCFM).